The following is an 81-amino-acid chain: Putative defensin-like protein 188 (81 aa).

The first 19 residues, 1–19 (MKNSSLLFILIVVFVISSS), serve as a signal peptide directing secretion. 4 disulfide bridges follow: cysteine 31/cysteine 81, cysteine 37/cysteine 57, cysteine 43/cysteine 75, and cysteine 47/cysteine 77.

It belongs to the DEFL family.

The protein localises to the secreted. This Arabidopsis thaliana (Mouse-ear cress) protein is Putative defensin-like protein 188 (LCR41).